Here is a 656-residue protein sequence, read N- to C-terminus: Anion exchange transporter (656 aa).

Residues 1 to 75 lie on the Cytoplasmic side of the membrane; sequence MTGAKRKKKS…LAFAVLSSVH (75 aa). A helical transmembrane segment spans residues 76-96; sequence PVFGLYGSLFPAIIYAIFGMG. Over 97–144 the chain is Extracellular; sequence HHVATGTFALTSLISANAVERIVPQNMQNLTTQSNTSVLGLSDFEMQR. Residues 145–165 traverse the membrane as a helical segment; that stretch reads IHVAAAVSFLGGVIQVAMFVL. Glutamine 166 is a topological domain (cytoplasmic). A helical transmembrane segment spans residues 167–187; that stretch reads LGSATFVVTEPVISAMTTGAA. The Extracellular segment spans residues 188–202; the sequence is THVVTSQVKYLLGMK. Residues 203–223 form a helical membrane-spanning segment; the sequence is MPYISGPLGFFYIYAYVFENI. Residues 224 to 227 lie on the Cytoplasmic side of the membrane; sequence KSVR. Residues 228–248 form a helical membrane-spanning segment; that stretch reads LEALLLSLLSIVVLVLVKELN. The Extracellular portion of the chain corresponds to 249–254; that stretch reads EQFKRK. The helical transmembrane segment at 255–275 threads the bilayer; the sequence is IKVVLPVDLVLIIAASFACYC. At 276 to 306 the chain is on the cytoplasmic side; that stretch reads TNMENTYGLEVVGHIPQGIPSPRAPPMNILS. The helical transmembrane segment at 307-327 threads the bilayer; it reads AVITEAFGVALVGYVASLALA. The Extracellular portion of the chain corresponds to 328 to 343; it reads QGSAKKFKYSIDDNQE. A helical membrane pass occupies residues 344–364; it reads FLAHGLSNIVSSFFFCIPSAA. Residues 365-383 lie on the Cytoplasmic side of the membrane; that stretch reads AMGRTAGLYSTGAKTQVAC. Transmembrane regions (helical) follow at residues 384-404 and 405-425; these read LISC…LYWL and PMCV…IQFR. At 426-448 the chain is on the extracellular side; sequence DLKKYWNVDKIDWGIWVSTYVFT. The chain crosses the membrane as a helical span at residues 449-469; the sequence is ICFAANVGLLFGVVCTIAIVI. Residues 470–656 are Cytoplasmic-facing; it reads GRFPRAMTVS…LSKLSDHSEV (187 aa). The STAS domain maps to 492-641; the sequence is TEMDSETLQQ…ESVSAAISHI (150 aa). The segment at 641–656 is membrane targeting; the sequence is IHSNKNLSKLSDHSEV.

It belongs to the SLC26A/SulP transporter (TC 2.A.53) family. In terms of tissue distribution, expressed in the thyroid gland (at protein level). Expressed in tonsillar high endothelial venule endothelial cells (HEVEC), placenta and in testis, expressed in a subgroup of basal cells in the epididymal ducts.

It is found in the basolateral cell membrane. The protein localises to the recycling endosome membrane. Its subcellular location is the apical cell membrane. It localises to the lateral cell membrane. The catalysed reaction is chloride(in) = chloride(out). The enzyme catalyses iodide(out) = iodide(in). It carries out the reaction bromide(in) = bromide(out). It catalyses the reaction oxalate(in) = oxalate(out). The catalysed reaction is nitrate(in) = nitrate(out). The enzyme catalyses sulfate(in) = sulfate(out). It carries out the reaction thiocyanate(in) = thiocyanate(out). It catalyses the reaction D-gluconate(in) = D-gluconate(out). The catalysed reaction is hydrogencarbonate(in) = hydrogencarbonate(out). The enzyme catalyses hydrogencarbonate(in) + chloride(out) = hydrogencarbonate(out) + chloride(in). Its activity is regulated as follows. Is active at both alkaline and acidic pH. Activity is inhibited by 4,4'-Di-isothiocyanatostilbene-2,2'-disulfonic acid (DIDS - an inhibitor of several anion channels and transporters). Acts as an anion channel mediating the transport of chloride, sulfate and oxalate ions. Mediates the transport of bromide, iodide, nitrate, gluconate, thiocyanate and bicarbonate ions. Its permeability towards bicarbonate is weak and increases when pH is above 7. Mediates thiocyanate transport in retinal pigment epithelium cells. Mediates iodide transport in the thyroid gland, playing an important role in the synthesis of thyroid hormones and the maintenance of thyroid function. Although it is an anion channel, according to PubMed:12736153 and PubMed:32119864 it has been shown to exhibit chloride-bicarbonate exchanger activity. In Homo sapiens (Human), this protein is Anion exchange transporter.